The following is a 486-amino-acid chain: Glycogen synthase (486 aa).

Lys15 provides a ligand contact to ADP-alpha-D-glucose.

Belongs to the glycosyltransferase 1 family. Bacterial/plant glycogen synthase subfamily.

It catalyses the reaction [(1-&gt;4)-alpha-D-glucosyl](n) + ADP-alpha-D-glucose = [(1-&gt;4)-alpha-D-glucosyl](n+1) + ADP + H(+). It participates in glycan biosynthesis; glycogen biosynthesis. Functionally, synthesizes alpha-1,4-glucan chains using ADP-glucose. This chain is Glycogen synthase, found in Pseudothermotoga lettingae (strain ATCC BAA-301 / DSM 14385 / NBRC 107922 / TMO) (Thermotoga lettingae).